The primary structure comprises 143 residues: MLIGEYKHVVDSKGRIILPSKFREELGERFILTKGLDNCLFGYSLKEWGVLEEKLKKLPLTSKEARTFLRFFFAGACECEVDKQGRVLIPQNLREYAGIQKEVFIIGVMTRIEIWSENNWLKEMTNENLSVDRIAQKMEELGI.

2 consecutive SpoVT-AbrB domains span residues 5–47 (EYKH…SLKE) and 76–119 (ACEC…SENN).

This sequence belongs to the MraZ family. As to quaternary structure, forms oligomers.

The protein resides in the cytoplasm. Its subcellular location is the nucleoid. The sequence is that of Transcriptional regulator MraZ from Caldicellulosiruptor bescii (strain ATCC BAA-1888 / DSM 6725 / KCTC 15123 / Z-1320) (Anaerocellum thermophilum).